Here is a 1726-residue protein sequence, read N- to C-terminus: Merozoite surface protein 1 (1726 aa).

An N-terminal signal peptide occupies residues 1 to 19; that stretch reads MKIIFFLCSFLFFIINTQC. The span at 61–124 shows a compositional bias: low complexity; it reads KGASAQSGTS…SGTSGTSPSS (64 aa). A disordered region spans residues 61 to 149; the sequence is KGASAQSGTS…PPADASDSDA (89 aa). The span at 125 to 134 shows a compositional bias: polar residues; that stretch reads RSNTLPRSNT. A glycan (N-linked (GlcNAc...) asparagine) is linked at N133. A compositionally biased stretch (low complexity) spans 135-144; sequence SSGASPPADA. N-linked (GlcNAc...) asparagine glycans are attached at residues N272, N501, N567, and N638. The tract at residues 735–771 is disordered; sequence SETTEDGGHSTHTLSQSGETEVTEETEETEETVGHTT. Residues 755–765 are compositionally biased toward acidic residues; sequence EVTEETEETEE. N827, N924, N944, N990, N1016, N1114, and N1221 each carry an N-linked (GlcNAc...) asparagine glycan. Positions 914-952 are enriched in low complexity; that stretch reads TGTSSTSSPGNTTVNTAQSATHSNSQNQQSNASSTNTQN. Residues 914–961 form a disordered region; it reads TGTSSTSSPGNTTVNTAQSATHSNSQNQQSNASSTNTQNGVAVSSGPA. Disordered regions lie at residues 1254 to 1284 and 1476 to 1497; these read VTPPQPDVTPSPLSVRVSGSSGSTKEETQIP and KEKFPSSPPTTPPSPAKTDEQK. Positions 1270–1284 are enriched in polar residues; the sequence is VSGSSGSTKEETQIP. Pro residues predominate over residues 1481-1490; the sequence is SSPPTTPPSP. N1613 carries an N-linked (GlcNAc...) asparagine glycan. EGF-like domains lie at 1617-1657 and 1658-1705; these read HQCV…VENP and NPTC…IFCS. 6 disulfides stabilise this stretch: C1619-C1630, C1624-C1640, C1642-C1653, C1661-C1674, C1668-C1688, and C1690-C1704. S1705 carries GPI-anchor amidated serine lipidation. Positions 1706–1726 are cleaved as a propeptide — removed in mature form; it reads SSNFLGISFLLILMLILYSFI.

In terms of assembly, forms a complex composed of subunits p83, p30, p38, and p42 which remain non-covalently associated; the complex is formed at the merozoite surface prior to egress from host erythrocytes. Forms a complex composed of processed MSP1 subunits, MSP6 subunit p36 and MSP7; the complex is formed at the merozoite surface prior to egress from host erythrocytes. Within the complex, interacts (via subunit p38) with MSP6 subunit p36 and (via subunits p83, p30 and p38) with MSP7 (via subunit p22). Forms a complex composed of MSP1, MSP6, DBLMSP1 and DBLMSP2. Within the complex, interacts (via subunit p38) with DBLMSP1 and DBLMSP2. Forms a complex composed of MSP1, and rhoptry proteins RhopH3, RAP1 and CLAG9/RhopH3. Within the complex, interacts (via subunits p42 and p19) with RhopH3 (via C-terminus). Forms a complex composed of MSP1, MSP6, MSP7, MSP9 and MSP3; within the complex, MSP6 and MSP9 mediate the binding to the host erythrocyte. Interacts (via subunits p19 and p42) with MSP9; the interaction is direct; MSP1 subunits p19 or p42, and MSP9 form a co-ligand complex that interacts with host SLC4A1/Band 3 protein. May interact with PFD6. Interacts with host spectrin. Interacts with host glycophorin GYPA in a sialic acid-independent manner. As to quaternary structure, interacts with host proinflammatory cytokine S100P; the interaction blocks S100P inflammatory and chemotactic activities. In terms of assembly, interacts with host SLC4A1/Band 3 (via 5ABC region) on the host erythrocyte surface in a sialic acid-independent manner. In terms of processing, the p190 precursor is cleaved by SUB1 prior to merozoite egress into 4 subunits p83, p30, p38, and p42 which remain non-covalently associated. SUB1-mediated proteolytic cleavage occurs in an orderly manner; the first cleavage occurs at the p30/p38 site, followed by cleavage at the p83/p30 site, the last cleavage occurs at the p38/p42 site. The order of cleavage is essential for parasite viability. SUB1-mediated processing is essential for merozoite egress. In a second processing step during erythrocyte invasion, p42 is cleaved by SUB2 into p33 and p19; the latter remains attached to the merozoite surface via its GPI-anchor and is endocytosed during the subsequent ring stage.

It localises to the cell membrane. Its subcellular location is the secreted. The protein localises to the vacuole membrane. During the asexual blood stage, involved in merozoite egress from host erythrocytes possibly via its interaction with the host cytoskeleton protein spectrin resulting in the destabilization of the host cytoskeleton and thus leading to erythrocyte cell membrane rupture. Involved in the binding to host erythrocytes and is required for host erythrocyte invasion. Its function is as follows. By binding to host proinflammatory cytokine S100P may interfere with host immune responses. Functionally, involved in merozoite invasion of host erythrocytes. May play a role in the biogenesis and/or function of the food vacuole during the intraerythrocytic development. This chain is Merozoite surface protein 1, found in Plasmodium falciparum (isolate Palo Alto / Uganda).